We begin with the raw amino-acid sequence, 213 residues long: Amelogenin, X isoform (213 aa).

Positions 1–16 (MGTWILFACLLGAAFS) are cleaved as a signal peptide. Ser-32 is modified (phosphoserine). 2 stretches are compositionally biased toward low complexity: residues 96–105 (VPQQPMMPVP) and 114–160 (QHHQ…QPLQ). Positions 96 to 213 (VPQQPMMPVP…TDKTKREEVD (118 aa)) are disordered. A compositionally biased stretch (pro residues) spans 161-194 (PLQPQPPVHPIQPLPPQPPLPPIFPMQPLPPMLP).

This sequence belongs to the amelogenin family. Interacts with KRT5. Post-translationally, phosphorylated by FAM20C in vitro.

Its subcellular location is the secreted. The protein localises to the extracellular space. It is found in the extracellular matrix. In terms of biological role, plays a role in the biomineralization of teeth. Seems to regulate the formation of crystallites during the secretory stage of tooth enamel development. Thought to play a major role in the structural organization and mineralization of developing enamel. This chain is Amelogenin, X isoform (AMELX), found in Bos taurus (Bovine).